We begin with the raw amino-acid sequence, 146 residues long: MKKIDVTEAIFAIKKEKNLTWEAIADAVGMTDVWITSACLGMNSCTEEVAEKLVAFLGLPAEAKSVLMEYPTKTWDEAIPQDPLIYRLYEVVGVYGPTLKEVIQEKFGDGIMSAIDFSMKVDKEENPKGDRVILTMNGKFLPYKSW.

Active-site residues include arginine 87, glutamate 90, and serine 113.

The protein belongs to the cyanase family.

The catalysed reaction is cyanate + hydrogencarbonate + 3 H(+) = NH4(+) + 2 CO2. Its function is as follows. Catalyzes the reaction of cyanate with bicarbonate to produce ammonia and carbon dioxide. This is Cyanate hydratase from Marinomonas sp. (strain MWYL1).